Reading from the N-terminus, the 87-residue chain is Hemocyanin alpha chain (87 aa).

It belongs to the tyrosinase family. Hemocyanin subfamily. As to quaternary structure, polymer that contains six different types of chains (alpha, beta, gamma, delta, epsilon, and zeta). As to expression, hemolymph.

The protein resides in the secreted. It is found in the extracellular space. Its function is as follows. Hemocyanins are copper-containing oxygen carriers occurring freely dissolved in the hemolymph of many mollusks and arthropods. This Tachypleus tridentatus (Japanese horseshoe crab) protein is Hemocyanin alpha chain.